Consider the following 303-residue polypeptide: Plasmodesmata-located protein 1 (303 aa).

The N-terminal stretch at 1–21 (MKLTYQFFIFWFFLPFFAISG) is a signal peptide. Residues 22–268 (DDDYKNLIFK…GEKRQHTERT (247 aa)) lie on the Extracellular side of the membrane. Gnk2-homologous domains follow at residues 27 to 136 (NLIF…SSGF) and 141 to 248 (GTEM…YYSH). Cystine bridges form between cysteine 33–cysteine 108, cysteine 84–cysteine 93, cysteine 96–cysteine 127, cysteine 149–cysteine 226, cysteine 202–cysteine 211, and cysteine 214–cysteine 239. The helical transmembrane segment at 269-289 (IALAVGGVFVLGFVIVCLLVL) threads the bilayer. Residues 269–289 (IALAVGGVFVLGFVIVCLLVL) form a necessary and sufficient for plasmodesmal targeting region. Residues 290 to 303 (RSAMKKKSNKYDAY) lie on the Cytoplasmic side of the membrane.

This sequence belongs to the cysteine-rich repeat secretory protein family. Plasmodesmata-located proteins (PDLD) subfamily. Interacts with AZI1. Interacts with PDLP5. Does not interact with DIR1. As to quaternary structure, (Microbial infection) Interacts with Grapevine fanleaf virus (GFLV) 2B-MP. Interacts with Cauliflower mosaic virus (CaMV) movement protein. As to expression, highly expressed in cell suspension. Expressed in epidermal and spongy mesophyll cells, and the cell wall interface at the base of the leaf trichome (at protein level). Expressed in haustoria-containing cells.

The protein localises to the cell membrane. Its subcellular location is the cell junction. It localises to the plasmodesma. Functionally, modulates cell-to-cell trafficking. Required for systemic acquired resistance (SAR) which is mediated by the signaling molecules azelaic acid (AzA), glycerol-3-phosphate (G3P), and salicylic acid (SA). Required for the proper localization and stability of AZI1 which is involved in SAR. Mediates callose deposition during downy mildew fungal infection around haustoria. Haustoria are unicellular protrusions from hyphae and function as the site of molecular exchange of nutrients and effectors between host and pathogen. The protein is Plasmodesmata-located protein 1 of Arabidopsis thaliana (Mouse-ear cress).